The chain runs to 332 residues: Anthranilate phosphoribosyltransferase (332 aa).

Residues glycine 78, 81 to 82 (GD), threonine 86, 88 to 91 (NVST), 106 to 114 (KHGNRAASS), and alanine 118 each bind 5-phospho-alpha-D-ribose 1-diphosphate. Glycine 78 contributes to the anthranilate binding site. Mg(2+) is bound at residue serine 90. Residue asparagine 109 coordinates anthranilate. Arginine 164 is an anthranilate binding site. Positions 223 and 224 each coordinate Mg(2+).

The protein belongs to the anthranilate phosphoribosyltransferase family. In terms of assembly, homodimer. Mg(2+) is required as a cofactor.

It carries out the reaction N-(5-phospho-beta-D-ribosyl)anthranilate + diphosphate = 5-phospho-alpha-D-ribose 1-diphosphate + anthranilate. It functions in the pathway amino-acid biosynthesis; L-tryptophan biosynthesis; L-tryptophan from chorismate: step 2/5. Functionally, catalyzes the transfer of the phosphoribosyl group of 5-phosphorylribose-1-pyrophosphate (PRPP) to anthranilate to yield N-(5'-phosphoribosyl)-anthranilate (PRA). The polypeptide is Anthranilate phosphoribosyltransferase (Sphingopyxis alaskensis (strain DSM 13593 / LMG 18877 / RB2256) (Sphingomonas alaskensis)).